The primary structure comprises 125 residues: Large ribosomal subunit protein bL20 (125 aa).

This sequence belongs to the bacterial ribosomal protein bL20 family.

Binds directly to 23S ribosomal RNA and is necessary for the in vitro assembly process of the 50S ribosomal subunit. It is not involved in the protein synthesizing functions of that subunit. The polypeptide is Large ribosomal subunit protein bL20 (Rhizorhabdus wittichii (strain DSM 6014 / CCUG 31198 / JCM 15750 / NBRC 105917 / EY 4224 / RW1) (Sphingomonas wittichii)).